The chain runs to 155 residues: Small ribosomal subunit protein uS17 (155 aa).

Belongs to the universal ribosomal protein uS17 family. As to quaternary structure, component of the small ribosomal subunit. Mature ribosomes consist of a small (40S) and a large (60S) subunit. The 40S subunit contains about 32 different proteins and 1 molecule of RNA (18S). The 60S subunit contains 45 different proteins and 3 molecules of RNA (25S, 5.8S and 5S).

It is found in the cytoplasm. Component of the ribosome, a large ribonucleoprotein complex responsible for the synthesis of proteins in the cell. The small ribosomal subunit (SSU) binds messenger RNAs (mRNAs) and translates the encoded message by selecting cognate aminoacyl-transfer RNA (tRNA) molecules. The large subunit (LSU) contains the ribosomal catalytic site termed the peptidyl transferase center (PTC), which catalyzes the formation of peptide bonds, thereby polymerizing the amino acids delivered by tRNAs into a polypeptide chain. The nascent polypeptides leave the ribosome through a tunnel in the LSU and interact with protein factors that function in enzymatic processing, targeting, and the membrane insertion of nascent chains at the exit of the ribosomal tunnel. This is Small ribosomal subunit protein uS17 from Candida albicans (strain SC5314 / ATCC MYA-2876) (Yeast).